We begin with the raw amino-acid sequence, 98 residues long: Citrate lyase acyl carrier protein 1 (98 aa).

The residue at position 14 (serine 14) is an O-(phosphoribosyl dephospho-coenzyme A)serine.

It belongs to the CitD family. Oligomer with a subunit composition of (alpha,beta,gamma)6.

The protein resides in the cytoplasm. Covalent carrier of the coenzyme of citrate lyase. This chain is Citrate lyase acyl carrier protein 1, found in Salmonella paratyphi A (strain ATCC 9150 / SARB42).